Reading from the N-terminus, the 400-residue chain is Ribosomal RNA dihydrouridine synthase (400 aa).

The FAD site is built by Ala14, Asp33, Asn34, Arg40, Gly46, Asn51, Val131, Glu367, and Phe380.

It belongs to the BaiN/RdsA family. RdsA subfamily. The cofactor is FAD.

The catalysed reaction is a 5,6-dihydrouridine in mRNA + NAD(+) = a uridine in mRNA + NADH + H(+). Functionally, catalyzes the synthesis of 5,6-dihydrouridine (D) at position 2449 in 23S rRNA. Can use NADH as a source of reducing equivalents but not NADPH. The chain is Ribosomal RNA dihydrouridine synthase from Escherichia coli (strain K12).